We begin with the raw amino-acid sequence, 536 residues long: CTP synthase (536 aa).

The segment at 1-267 (MSKFVFVTGG…CKETLKYLEL (267 aa)) is amidoligase domain. Serine 13 contributes to the CTP binding site. Serine 13 provides a ligand contact to UTP. ATP is bound by residues 14 to 19 (SIGKGI) and aspartate 71. The Mg(2+) site is built by aspartate 71 and glutamate 141. Residues 148-150 (DIE), 188-193 (KTKPTQ), and lysine 224 contribute to the CTP site. Residues 188–193 (KTKPTQ) and lysine 224 each bind UTP. A Glutamine amidotransferase type-1 domain is found at 292-534 (KVALVGKYIE…IKSSQENLTQ (243 aa)). Glycine 354 lines the L-glutamine pocket. The Nucleophile; for glutamine hydrolysis role is filled by cysteine 381. L-glutamine contacts are provided by residues 382-385 (LGMQ), glutamate 405, and arginine 462. Active-site residues include histidine 507 and glutamate 509.

It belongs to the CTP synthase family. Homotetramer.

The enzyme catalyses UTP + L-glutamine + ATP + H2O = CTP + L-glutamate + ADP + phosphate + 2 H(+). It catalyses the reaction L-glutamine + H2O = L-glutamate + NH4(+). It carries out the reaction UTP + NH4(+) + ATP = CTP + ADP + phosphate + 2 H(+). It functions in the pathway pyrimidine metabolism; CTP biosynthesis via de novo pathway; CTP from UDP: step 2/2. Allosterically activated by GTP, when glutamine is the substrate; GTP has no effect on the reaction when ammonia is the substrate. The allosteric effector GTP functions by stabilizing the protein conformation that binds the tetrahedral intermediate(s) formed during glutamine hydrolysis. Inhibited by the product CTP, via allosteric rather than competitive inhibition. Catalyzes the ATP-dependent amination of UTP to CTP with either L-glutamine or ammonia as the source of nitrogen. Regulates intracellular CTP levels through interactions with the four ribonucleotide triphosphates. This is CTP synthase from Prochlorococcus marinus (strain MIT 9312).